The following is a 425-amino-acid chain: Succinate--CoA ligase [ADP-forming] subunit beta, mitochondrial (425 aa).

The N-terminal 14 residues, Asn1–Asn14, are a transit peptide targeting the mitochondrion. In terms of domain architecture, ATP-grasp spans Met23–Ile250. Lys40 carries the N6-acetyllysine modification. Position 46 is a phosphotyrosine (Tyr46). N6-acetyllysine; alternate is present on Lys50. Lys50 carries the N6-succinyllysine; alternate modification. ATP contacts are provided by residues Lys60 and Gly67 to Gly69. N6-acetyllysine is present on residues Lys91, Lys101, Lys105, and Lys178. 2 residues coordinate Mg(2+): Asn220 and Asp234. Residue Ser241 is modified to Phosphoserine. Asn285 contacts substrate. Thr303 carries the post-translational modification Phosphothreonine. Position 330 is an N6-acetyllysine (Lys330). Gly342–Met344 is a binding site for substrate. N6-acetyllysine is present on Lys400.

Belongs to the succinate/malate CoA ligase beta subunit family. ATP-specific subunit beta subfamily. In terms of assembly, heterodimer of an alpha and a beta subunit. The beta subunit determines specificity for ATP. Interacts with ALAS2. Requires Mg(2+) as cofactor.

The protein localises to the mitochondrion. It catalyses the reaction succinate + ATP + CoA = succinyl-CoA + ADP + phosphate. It functions in the pathway carbohydrate metabolism; tricarboxylic acid cycle; succinate from succinyl-CoA (ligase route): step 1/1. In terms of biological role, ATP-specific succinyl-CoA synthetase functions in the citric acid cycle (TCA), coupling the hydrolysis of succinyl-CoA to the synthesis of ATP and thus represents the only step of substrate-level phosphorylation in the TCA. The beta subunit provides nucleotide specificity of the enzyme and binds the substrate succinate, while the binding sites for coenzyme A and phosphate are found in the alpha subunit. This chain is Succinate--CoA ligase [ADP-forming] subunit beta, mitochondrial, found in Sus scrofa (Pig).